The sequence spans 339 residues: D-erythrose-4-phosphate dehydrogenase (339 aa).

NAD(+)-binding positions include 12–13 (RI) and Arg81. Substrate contacts are provided by residues 154-156 (SCT), Arg200, 213-214 (TR), and Arg236. The active-site Nucleophile is the Cys155. Asn318 contacts NAD(+).

This sequence belongs to the glyceraldehyde-3-phosphate dehydrogenase family. Epd subfamily. As to quaternary structure, homotetramer.

Its subcellular location is the cytoplasm. The catalysed reaction is D-erythrose 4-phosphate + NAD(+) + H2O = 4-phospho-D-erythronate + NADH + 2 H(+). The protein operates within cofactor biosynthesis; pyridoxine 5'-phosphate biosynthesis; pyridoxine 5'-phosphate from D-erythrose 4-phosphate: step 1/5. In terms of biological role, catalyzes the NAD-dependent conversion of D-erythrose 4-phosphate to 4-phosphoerythronate. The protein is D-erythrose-4-phosphate dehydrogenase of Cronobacter sakazakii (strain ATCC BAA-894) (Enterobacter sakazakii).